We begin with the raw amino-acid sequence, 1574 residues long: MSCSNNTEPTRIAILGTDNIVVDHGIWLNWVTKDLFDNVKSSTYVLVTDTNLYDTYVPPFKHAFDGATDTTAGPRLLTLAIPPGEISKSRQSKAHIEDWMLSQQCTRDTVIIALGGGVIGDMLGYVAATFMRGIRFVQVPTTLLAMVDSSIGGKTAIDTPMGKNLVGAFWQPSRIYIDLAFLETLPSREFINGMAEVIKTAAIWDENEFATLEANAPSIVAAVNQPTGPGRLSPIREILKRIVLGSARVKAEVVSSDEREGGLRNLLNFGHSIGHAYEALLTPQLLHGEAVAIGMVKEAELARYLGVLRPSAVARLAKCISSYGLPTSLGDKRVIKLTAGKRCPVDILLQKMAVDKKNDGRKKKIVLLSAIGKTHEPRATTVEDAAIKVMLSASTLITPGVSTKLATTVTPPGSKSISNRALILAALGEGTCRIKNLLHSDDVEFMLTAITRLGGASYAWEDAGEVLVLTGKGGQLRASSDPLYLGNAGTASRFLTTVVALCSPADVSSTVLTGNARMQVRPIGPLVDALRSNGVSIDYLGPGKSLPLRIDAAGGFAGGVIELAATVSSQYVSSILMAAPYAKEPVTLRLVGGKPISQPYIDMTLAMMKTFGVQVERSSSDPNTYHIAKGTYKNPAEYTIESDASSATYPLAIAAITGTTCTVPNIGSSSLQGDARFAIDVLQPMGCTVQQTASSTTVTGPAPGGLLGLPHVDMEPMTDAFLTASVLAAVAAGTTKISGIANQRVKECNRIAAMREQLGKFGIATDEFDDGIIVTGQPLDTLKTPDAGVFCYDDHRVAMSFSVLSTVANAPVTILERECTGKTWPGWWDTLSQSFGLRLNGDDKHPGVEGRHQQDHTTRSVFIVGMRGAGKTTTGRWMAKLLKRPFIDLDEELERRSGMTIPEMIHGTKGWEGFRRDELQLLHDVMENQASGHVFSCGGGIVESPEARKLLIAYKEKGGCVLLVHRDTKQVVDYLLQDKTRPAYREDIEDVYYRRKPLYDECSNFQYFSPHPAASVASRDAPLDFRCFVDAICGDGSKVTKMTAKEQSFFVSLTVPSVDSAVDVIPQVVVGSDAVELRVDLLQDQTPESVARQVSALRSAAGMPIIFTLRTVSQGGCFPDADHTQALSLYILALRMGVEFIDLEMTWPEHILQTVTNLKGRSRIIASHHDPRGELSWKNGSWTPFYNRALQWGSVIKLVGTAQSMEDNYDLARFKSDMLASHPTPVIALNMGALGKLSRVLNGFLTPVSHPALPFKAAPGQLSAAEIRRALFLLGNINAQSFHLFGKPISKSRSPALHNSLFNLTGLPHKYGLVETDQADEVAAVIREPDFGGASVTIPLKLDVMPLLDEVSESAKVIGAVNTIIPMPLDGSQKRRLLGDNTDWRGMVHCLESIGVASESTASTTTASALVIGSGGTTRAAIFALKSHGYHPIYMLARNEQSLETIRASFPTDFDLRALGGPAEVFTLAVAPTVVISTIPADKPMDPSLRETLEVVLKSPVSEQRTRVLLEMAYQPRHTAAMRLAEDAGWRTIPGAEVLAAQGWHQFQMWTGITPRFIDAQAAVNGDEIPTSTD.

The interval 1–384 is 3-dehydroquinate synthase; sequence MSCSNNTEPT…HEPRATTVED (384 aa). NAD(+)-binding positions include 49–51, 85–88, 116–118, and Asp121; these read DTN, EISK, and GGV. Arg132 lines the 7-phospho-2-dehydro-3-deoxy-D-arabino-heptonate pocket. 141-142 is an NAD(+) binding site; the sequence is TT. 7-phospho-2-dehydro-3-deoxy-D-arabino-heptonate-binding residues include Asp148 and Lys154. Lys163 is a binding site for NAD(+). Asn164 contacts 7-phospho-2-dehydro-3-deoxy-D-arabino-heptonate. Residues 181–184 and Asn192 contribute to the NAD(+) site; that span reads FLET. Residue Glu196 participates in Zn(2+) binding. Residues 196–199 and Lys250 each bind 7-phospho-2-dehydro-3-deoxy-D-arabino-heptonate; that span reads EVIK. The active-site Proton acceptor; for 3-dehydroquinate synthase activity is the Glu260. 7-phospho-2-dehydro-3-deoxy-D-arabino-heptonate contacts are provided by residues 264-268 and His271; that span reads RNLLN. A Zn(2+)-binding site is contributed by His271. Residue His275 is the Proton acceptor; for 3-dehydroquinate synthase activity of the active site. The 7-phospho-2-dehydro-3-deoxy-D-arabino-heptonate site is built by His287 and Lys356. Residue His287 participates in Zn(2+) binding. An EPSP synthase region spans residues 397–837; it reads ITPGVSTKLA…WDTLSQSFGL (441 aa). Residue Cys819 is the For EPSP synthase activity of the active site. The shikimate kinase stretch occupies residues 858-1052; the sequence is TRSVFIVGMR…TAKEQSFFVS (195 aa). 865–872 serves as a coordination point for ATP; that stretch reads GMRGAGKT. The interval 1053-1266 is 3-dehydroquinase; the sequence is LTVPSVDSAV…AAPGQLSAAE (214 aa). The active-site Proton acceptor; for 3-dehydroquinate dehydratase activity is His1169. Lys1197 acts as the Schiff-base intermediate with substrate; for 3-dehydroquinate dehydratase activity in catalysis. The tract at residues 1279-1574 is shikimate dehydrogenase; it reads AQSFHLFGKP…NGDEIPTSTD (296 aa).

In the N-terminal section; belongs to the sugar phosphate cyclases superfamily. Dehydroquinate synthase family. It in the 2nd section; belongs to the EPSP synthase family. This sequence in the 3rd section; belongs to the shikimate kinase family. The protein in the 4th section; belongs to the type-I 3-dehydroquinase family. In the C-terminal section; belongs to the shikimate dehydrogenase family. As to quaternary structure, homodimer. Zn(2+) is required as a cofactor.

It is found in the cytoplasm. The enzyme catalyses 7-phospho-2-dehydro-3-deoxy-D-arabino-heptonate = 3-dehydroquinate + phosphate. It catalyses the reaction 3-dehydroquinate = 3-dehydroshikimate + H2O. It carries out the reaction shikimate + NADP(+) = 3-dehydroshikimate + NADPH + H(+). The catalysed reaction is shikimate + ATP = 3-phosphoshikimate + ADP + H(+). The enzyme catalyses 3-phosphoshikimate + phosphoenolpyruvate = 5-O-(1-carboxyvinyl)-3-phosphoshikimate + phosphate. The protein operates within metabolic intermediate biosynthesis; chorismate biosynthesis; chorismate from D-erythrose 4-phosphate and phosphoenolpyruvate: step 2/7. It participates in metabolic intermediate biosynthesis; chorismate biosynthesis; chorismate from D-erythrose 4-phosphate and phosphoenolpyruvate: step 3/7. It functions in the pathway metabolic intermediate biosynthesis; chorismate biosynthesis; chorismate from D-erythrose 4-phosphate and phosphoenolpyruvate: step 4/7. Its pathway is metabolic intermediate biosynthesis; chorismate biosynthesis; chorismate from D-erythrose 4-phosphate and phosphoenolpyruvate: step 5/7. The protein operates within metabolic intermediate biosynthesis; chorismate biosynthesis; chorismate from D-erythrose 4-phosphate and phosphoenolpyruvate: step 6/7. Functionally, the AROM polypeptide catalyzes 5 consecutive enzymatic reactions in prechorismate polyaromatic amino acid biosynthesis. The sequence is that of Pentafunctional AROM polypeptide from Verticillium alfalfae (strain VaMs.102 / ATCC MYA-4576 / FGSC 10136) (Verticillium wilt of alfalfa).